Reading from the N-terminus, the 143-residue chain is Probable glycine cleavage system H protein (143 aa).

One can recognise a Lipoyl-binding domain in the interval 36–118 (VATVGITDFA…YGEGWIFKIK (83 aa)). K77 carries the post-translational modification N6-lipoyllysine.

Belongs to the GcvH family. As to quaternary structure, the glycine cleavage system is composed of four proteins: P, T, L and H. (R)-lipoate serves as cofactor.

Its function is as follows. The glycine cleavage system catalyzes the degradation of glycine. The H protein shuttles the methylamine group of glycine from the P protein to the T protein. This Aeropyrum pernix (strain ATCC 700893 / DSM 11879 / JCM 9820 / NBRC 100138 / K1) protein is Probable glycine cleavage system H protein.